The chain runs to 175 residues: ATP-dependent protease subunit HslV (175 aa).

Threonine 2 is a catalytic residue. Na(+)-binding residues include alanine 156, cysteine 159, and threonine 162.

This sequence belongs to the peptidase T1B family. HslV subfamily. A double ring-shaped homohexamer of HslV is capped on each side by a ring-shaped HslU homohexamer. The assembly of the HslU/HslV complex is dependent on binding of ATP.

Its subcellular location is the cytoplasm. It catalyses the reaction ATP-dependent cleavage of peptide bonds with broad specificity.. Its activity is regulated as follows. Allosterically activated by HslU binding. Protease subunit of a proteasome-like degradation complex believed to be a general protein degrading machinery. This Rhizobium etli (strain ATCC 51251 / DSM 11541 / JCM 21823 / NBRC 15573 / CFN 42) protein is ATP-dependent protease subunit HslV.